A 92-amino-acid chain; its full sequence is Kinetoplastid membrane protein 11C (92 aa).

It belongs to the KMP-11 family. As to quaternary structure, monomer.

Its subcellular location is the cytoplasm. The protein localises to the cytoskeleton. It is found in the cell projection. The protein resides in the cilium. It localises to the flagellum. May be involved in the regulation of the cytoskeleton through interaction with the subpellicular microtubules. May be involved in parasite mobility and attachment to the surface of the host cell. Behaves as a strong immunogen during infection. In Leishmania infantum, this protein is Kinetoplastid membrane protein 11C (KMP-11C).